Reading from the N-terminus, the 329-residue chain is Synaptonemal complex central element protein 1 (329 aa).

The segment at 1 to 29 is disordered; it reads MATRPQPLGMEPEGSADLLHGPEGARGQY. Coiled coils occupy residues 54-167 and 194-294; these read RIEV…LETL and KEQL…ILAH. Positions 291–329 are disordered; it reads ILAHSTQNEEDSSWRMASPKPVEVHEETAQDQERPSSRT. Positions 312 to 329 are enriched in basic and acidic residues; it reads VEVHEETAQDQERPSSRT.

This sequence belongs to the SYCE family. As to quaternary structure, homodimer. Found in a complex with SYCP1 and SYCE2. Interacts with SYCP1, SYCE2 and SYCE3. Interacts with SIX6OS1. As to expression, meiotic cells (at protein level). Expressed in the ovary and testis.

The protein resides in the nucleus. The protein localises to the chromosome. Major component of the transverse central element of synaptonemal complexes (SCS), formed between homologous chromosomes during meiotic prophase. Requires SYCP1 in order to be incorporated into the central element. May have a role in the synaptonemal complex assembly, stabilization and recombination. The chain is Synaptonemal complex central element protein 1 (Syce1) from Mus musculus (Mouse).